Reading from the N-terminus, the 285-residue chain is Bifunctional protein FolD (285 aa).

NADP(+) contacts are provided by residues 166 to 168 (GAS) and isoleucine 232.

The protein belongs to the tetrahydrofolate dehydrogenase/cyclohydrolase family. As to quaternary structure, homodimer.

The enzyme catalyses (6R)-5,10-methylene-5,6,7,8-tetrahydrofolate + NADP(+) = (6R)-5,10-methenyltetrahydrofolate + NADPH. It carries out the reaction (6R)-5,10-methenyltetrahydrofolate + H2O = (6R)-10-formyltetrahydrofolate + H(+). The protein operates within one-carbon metabolism; tetrahydrofolate interconversion. Catalyzes the oxidation of 5,10-methylenetetrahydrofolate to 5,10-methenyltetrahydrofolate and then the hydrolysis of 5,10-methenyltetrahydrofolate to 10-formyltetrahydrofolate. This chain is Bifunctional protein FolD, found in Buchnera aphidicola subsp. Schizaphis graminum (strain Sg).